The primary structure comprises 66 residues: Large ribosomal subunit protein bL35 (66 aa).

Residues 1 to 22 (MAYKLKSHRGAAKRFKKTASGG) form a disordered region.

Belongs to the bacterial ribosomal protein bL35 family.

The polypeptide is Large ribosomal subunit protein bL35 (Pseudoalteromonas translucida (strain TAC 125)).